A 34-amino-acid polypeptide reads, in one-letter code: Photosystem II reaction center protein M (34 aa).

A helical transmembrane segment spans residues 5–25 (ILGLIATTLFILIPTSFLLIL).

It belongs to the PsbM family. PSII is composed of 1 copy each of membrane proteins PsbA, PsbB, PsbC, PsbD, PsbE, PsbF, PsbH, PsbI, PsbJ, PsbK, PsbL, PsbM, PsbT, PsbX, PsbY, PsbZ, Psb30/Ycf12, at least 3 peripheral proteins of the oxygen-evolving complex and a large number of cofactors. It forms dimeric complexes.

It is found in the plastid. The protein localises to the chloroplast thylakoid membrane. One of the components of the core complex of photosystem II (PSII). PSII is a light-driven water:plastoquinone oxidoreductase that uses light energy to abstract electrons from H(2)O, generating O(2) and a proton gradient subsequently used for ATP formation. It consists of a core antenna complex that captures photons, and an electron transfer chain that converts photonic excitation into a charge separation. This subunit is found at the monomer-monomer interface. This Pleurastrum terricola (Filamentous green alga) protein is Photosystem II reaction center protein M.